Here is a 330-residue protein sequence, read N- to C-terminus: MFGLRRNAVIGLNLYCGGASLGAGGGSPAGTRLAAEEAKARREGGGEAALLPGARVVARPPPVGAEDPDVTASAERRLLKSPGLLAVPPEEMAASAAAIMSPEEELDGCEPEVLSKRPAVLPLLERVSEAAKSSGADGSLPSTPPPPEEEDDELYRQSLEIISRYLREQATGSKDAKPLGEAGAAGRRALETLRRVGDGVQRNHETAFQGMLRKLDIKNEDDVKSFSRVMTHVFKDGVTNWGRIVTLISFGAFVAKHLKSINQESCIEPLAESITDVLVRTKRDWLVKQRGWDGFVEFFHVQDLEGGIRNVLLAFAGVAGVGAGLAYLIR.

A PEST-like region spans residues Leu85 to Tyr155. The residue at position 101 (Ser101) is a Phosphoserine. Residue Lys116 forms a Glycyl lysine isopeptide (Lys-Gly) (interchain with G-Cter in ubiquitin) linkage. A disordered region spans residues Glu129–Glu153. Position 139 is a phosphoserine; by GSK3-alpha and GSK3-beta (Ser139). The residue at position 142 (Ser142) is a Phosphoserine. Thr143 carries the phosphothreonine; by MAPK modification. Glycyl lysine isopeptide (Lys-Gly) (interchain with G-Cter in ubiquitin) cross-links involve residues Lys174 and Lys177. The BH3 motif lies at Ala189 to Asn203. The BH1 signature appears at His232–Ala252. A BH2 motif is present at residues Asp284–Phe299. The helical transmembrane segment at Gly307–Ile329 threads the bilayer.

This sequence belongs to the Bcl-2 family. Interacts with HIF3A (via C-terminus domain). Interacts with BOK, BIK, BAX, BAK1, and TPT1. Interacts with unphosphorylated BAD. Interacts with BMF, BBC3 and PMAIP1. Interacts with BOP. Interacts with BCL2L11; may sequester BCL2L11 to prevent its pro-apoptotic activity. Interacts with GIMAP5 and HSPA8/HSC70; the interaction between HSPA8 and MCL1 is impaired in the absence of GIMAP5. In terms of processing, cleaved by CASP3 during apoptosis, yielding a pro-apoptotic C-terminal fragment. Post-translationally, rapidly degraded in the absence of phosphorylation in the PEST region. Phosphorylated on Ser-139, by GSK3, in response to IL3/interleukin-3 withdrawal. Phosphorylation at Ser-139 induces ubiquitination and proteasomal degradation, abrogating the anti-apoptotic activity. Treatment with taxol or okadaic acid induces phosphorylation on additional sites. In terms of processing, ubiquitinated. Ubiquitination is induced by phosphorylation at Ser-139. Deubiquitinated by USP20; leading to increased stability. In terms of tissue distribution, ubiquitous. Highly expressed in heart, spleen, lung, liver, skeletal muscle and kidney. Detected at lower levels in brain, ovary, oviduct and testis.

Its subcellular location is the membrane. It localises to the cytoplasm. It is found in the mitochondrion. The protein resides in the nucleus. The protein localises to the nucleoplasm. In terms of biological role, involved in the regulation of apoptosis versus cell survival, and in the maintenance of viability but not of proliferation. Mediates its effects by interactions with a number of other regulators of apoptosis. The chain is Induced myeloid leukemia cell differentiation protein Mcl-1 homolog (Mcl1) from Rattus norvegicus (Rat).